We begin with the raw amino-acid sequence, 322 residues long: tRNA uridine(34) hydroxylase (322 aa).

The Rhodanese domain occupies 125–219 (QQEDTIVVDA…YGKDPEVQGE (95 aa)). Residue Cys-179 is the Cysteine persulfide intermediate of the active site.

The protein belongs to the TrhO family.

It catalyses the reaction uridine(34) in tRNA + AH2 + O2 = 5-hydroxyuridine(34) in tRNA + A + H2O. In terms of biological role, catalyzes oxygen-dependent 5-hydroxyuridine (ho5U) modification at position 34 in tRNAs. This chain is tRNA uridine(34) hydroxylase, found in Bacillus licheniformis (strain ATCC 14580 / DSM 13 / JCM 2505 / CCUG 7422 / NBRC 12200 / NCIMB 9375 / NCTC 10341 / NRRL NRS-1264 / Gibson 46).